A 226-amino-acid chain; its full sequence is Isoprenyl transferase (226 aa).

The active site involves Asp12. A Mg(2+)-binding site is contributed by Asp12. Substrate is bound by residues 13–16 (GNAR), Trp17, Lys25, His29, and 57–59 (SSE). The active-site Proton acceptor is the Asn60. Substrate contacts are provided by residues Trp61, Arg63, Arg174, and 180-182 (RIS). Residue Glu193 participates in Mg(2+) binding.

It belongs to the UPP synthase family. As to quaternary structure, homodimer. Mg(2+) serves as cofactor.

Its function is as follows. Catalyzes the condensation of isopentenyl diphosphate (IPP) with allylic pyrophosphates generating different type of terpenoids. The protein is Isoprenyl transferase of Rickettsia bellii (strain RML369-C).